The following is a 98-amino-acid chain: Putative membrane protein insertion efficiency factor (98 aa).

Belongs to the UPF0161 family.

It is found in the cell inner membrane. Could be involved in insertion of integral membrane proteins into the membrane. The chain is Putative membrane protein insertion efficiency factor from Cupriavidus pinatubonensis (strain JMP 134 / LMG 1197) (Cupriavidus necator (strain JMP 134)).